The chain runs to 315 residues: Homoserine kinase (315 aa).

An ATP-binding site is contributed by 97–107 (PPARGLGSSAT).

It belongs to the GHMP kinase family. Homoserine kinase subfamily.

Its subcellular location is the cytoplasm. It catalyses the reaction L-homoserine + ATP = O-phospho-L-homoserine + ADP + H(+). Its pathway is amino-acid biosynthesis; L-threonine biosynthesis; L-threonine from L-aspartate: step 4/5. In terms of biological role, catalyzes the ATP-dependent phosphorylation of L-homoserine to L-homoserine phosphate. This chain is Homoserine kinase, found in Prochlorococcus marinus (strain NATL1A).